The following is a 305-amino-acid chain: Ribonucleoside-diphosphate reductase small subunit (305 aa).

Fe cation is bound by residues E64, E94, and H97. Residue Y101 is part of the active site. A helical membrane pass occupies residues V150–L170. Fe cation is bound by residues E157, E191, and H194.

The protein belongs to the ribonucleoside diphosphate reductase small chain family. As to quaternary structure, heterotetramer composed of a homodimer of the large subunit (R1) and a homodimer of the small subunit (R2). Larger multisubunit protein complex are also active, composed of (R1)n(R2)n. It depends on Fe cation as a cofactor.

It localises to the host membrane. The catalysed reaction is a 2'-deoxyribonucleoside 5'-diphosphate + [thioredoxin]-disulfide + H2O = a ribonucleoside 5'-diphosphate + [thioredoxin]-dithiol. Ribonucleoside-diphosphate reductase holoenzyme provides the precursors necessary for viral DNA synthesis. Allows virus growth in non-dividing cells, as well as reactivation from latency in infected hosts. Catalyzes the biosynthesis of deoxyribonucleotides from the corresponding ribonucleotides. This is Ribonucleoside-diphosphate reductase small subunit from Alcelaphine herpesvirus 1 (strain C500) (AlHV-1).